The sequence spans 127 residues: Small ribosomal subunit protein uS11 (127 aa).

It belongs to the universal ribosomal protein uS11 family. As to quaternary structure, part of the 30S ribosomal subunit. Interacts with proteins S7 and S18. Binds to IF-3.

Its function is as follows. Located on the platform of the 30S subunit, it bridges several disparate RNA helices of the 16S rRNA. Forms part of the Shine-Dalgarno cleft in the 70S ribosome. This chain is Small ribosomal subunit protein uS11, found in Rickettsia africae (strain ESF-5).